The primary structure comprises 206 residues: Ribosome maturation factor RimP (206 aa).

Residues 164-206 (GGIPEGRAVPSDAVDLTDDSGVDSVEDDEAELEDVENEEGFDK) are disordered. A compositionally biased stretch (acidic residues) spans 178 to 206 (DLTDDSGVDSVEDDEAELEDVENEEGFDK).

The protein belongs to the RimP family.

It localises to the cytoplasm. Functionally, required for maturation of 30S ribosomal subunits. The polypeptide is Ribosome maturation factor RimP (Rhodococcus erythropolis (strain PR4 / NBRC 100887)).